The sequence spans 78 residues: RNA-binding protein Hfq (78 aa).

In terms of domain architecture, Sm spans 10-69 (DPFLNALRKEHVPVSIYLVNGIKLQGNIESFDQYVVLLRNTVTQMVYKHAISTVVPARPV).

The protein belongs to the Hfq family. As to quaternary structure, homohexamer.

Functionally, RNA chaperone that binds small regulatory RNA (sRNAs) and mRNAs to facilitate mRNA translational regulation in response to envelope stress, environmental stress and changes in metabolite concentrations. Also binds with high specificity to tRNAs. The chain is RNA-binding protein Hfq from Paraburkholderia phytofirmans (strain DSM 17436 / LMG 22146 / PsJN) (Burkholderia phytofirmans).